Consider the following 572-residue polypeptide: Proline--tRNA ligase (572 aa).

This sequence belongs to the class-II aminoacyl-tRNA synthetase family. ProS type 1 subfamily. As to quaternary structure, homodimer.

It is found in the cytoplasm. It catalyses the reaction tRNA(Pro) + L-proline + ATP = L-prolyl-tRNA(Pro) + AMP + diphosphate. Functionally, catalyzes the attachment of proline to tRNA(Pro) in a two-step reaction: proline is first activated by ATP to form Pro-AMP and then transferred to the acceptor end of tRNA(Pro). As ProRS can inadvertently accommodate and process non-cognate amino acids such as alanine and cysteine, to avoid such errors it has two additional distinct editing activities against alanine. One activity is designated as 'pretransfer' editing and involves the tRNA(Pro)-independent hydrolysis of activated Ala-AMP. The other activity is designated 'posttransfer' editing and involves deacylation of mischarged Ala-tRNA(Pro). The misacylated Cys-tRNA(Pro) is not edited by ProRS. The protein is Proline--tRNA ligase of Alteromonas mediterranea (strain DSM 17117 / CIP 110805 / LMG 28347 / Deep ecotype).